Reading from the N-terminus, the 522-residue chain is Na(+)/H(+) antiporter NhaB (522 aa).

9 helical membrane-spanning segments follow: residues Phe13 to Pro33, Leu98 to Phe118, Ala140 to Val160, Phe239 to Leu259, Ala304 to Leu324, Leu356 to Ile376, Leu390 to Val410, Ala446 to Ile466, and Ala477 to Val497.

This sequence belongs to the NhaB Na(+)/H(+) (TC 2.A.34) antiporter family.

The protein resides in the cell inner membrane. It catalyses the reaction 2 Na(+)(in) + 3 H(+)(out) = 2 Na(+)(out) + 3 H(+)(in). In terms of biological role, na(+)/H(+) antiporter that extrudes sodium in exchange for external protons. The polypeptide is Na(+)/H(+) antiporter NhaB (Yersinia pestis bv. Antiqua (strain Angola)).